Here is a 493-residue protein sequence, read N- to C-terminus: DM7 family protein GM11958 (493 aa).

The disordered stretch occupies residues 434–493 (ATKSTDTRDDGMNTADYQSQFPELEQDSEPEPEPEPEPQTEDEGEDEDIEILASLCSGSI). The span at 457-483 (LEQDSEPEPEPEPEPQTEDEGEDEDIE) shows a compositional bias: acidic residues.

The protein belongs to the DM7 family.

This is DM7 family protein GM11958 from Drosophila sechellia (Fruit fly).